The chain runs to 249 residues: Sugar fermentation stimulation protein homolog (249 aa).

It belongs to the SfsA family.

The protein is Sugar fermentation stimulation protein homolog of Synechococcus sp. (strain RCC307).